Here is a 254-residue protein sequence, read N- to C-terminus: Persulfide dioxygenase ETHE1, mitochondrial (254 aa).

The N-terminal 7 residues, 1–7, are a transit peptide targeting the mitochondrion; the sequence is MAEAVLR. Ser-14 and Ser-19 each carry phosphoserine. Position 66 is an N6-acetyllysine (Lys-66). 3 residues coordinate Fe cation: His-79, His-135, and Asp-154. The residue at position 172 (Lys-172) is an N6-acetyllysine; alternate. Lys-172 is modified (N6-succinyllysine; alternate).

The protein belongs to the metallo-beta-lactamase superfamily. Glyoxalase II family. In terms of assembly, homodimer. Monomer. Interacts with TST. May interact with RELA. Requires Fe(2+) as cofactor. Ubiquitously expressed.

The protein resides in the cytoplasm. It localises to the nucleus. It is found in the mitochondrion matrix. The catalysed reaction is S-sulfanylglutathione + O2 + H2O = sulfite + glutathione + 2 H(+). With respect to regulation, glutathione increases enzyme activity. In terms of biological role, sulfur dioxygenase that plays an essential role in hydrogen sulfide catabolism in the mitochondrial matrix. Hydrogen sulfide (H(2)S) is first oxidized by SQRDL, giving rise to cysteine persulfide residues. ETHE1 consumes molecular oxygen to catalyze the oxidation of the persulfide, once it has been transferred to a thiophilic acceptor, such as glutathione (R-SSH). Plays an important role in metabolic homeostasis in mitochondria by metabolizing hydrogen sulfide and preventing the accumulation of supraphysiological H(2)S levels that have toxic effects, due to the inhibition of cytochrome c oxidase. First described as a protein that can shuttle between the nucleus and the cytoplasm and suppress p53-induced apoptosis by sequestering the transcription factor RELA/NFKB3 in the cytoplasm and preventing its accumulation in the nucleus. This chain is Persulfide dioxygenase ETHE1, mitochondrial (ETHE1), found in Homo sapiens (Human).